The following is a 188-amino-acid chain: Pallidipin (188 aa).

A signal peptide spans 1-18 (MKVIIAATLLGILMHAFA). Cystine bridges form between Cys-21–Cys-137, Cys-55–Cys-184, and Cys-89–Cys-105.

It belongs to the calycin superfamily. Triabin family. Expressed in salivary glands.

The protein localises to the secreted. Functionally, has been described as a specific inhibitor of collagen-induced platelet aggregation. However, as it does not affect platelet shape change or adhesion, it is plausible that it exerts its antiplatelet activity by a mechanism similar to that of triplatin, moubatin and dipetalodipin as scavenging eicosanoids involved in inflammation such as thromboxane A2 (TXA2). This chain is Pallidipin, found in Meccus pallidipennis (Triatomine bug).